The following is a 382-amino-acid chain: Nonsense-mediated mRNA decay factor SMG9 (382 aa).

The interval 1–66 (MKKVEILKTP…PDSSVSKSSG (66 aa)) is disordered.

Belongs to the SMG9 family.

In terms of biological role, involved in nonsense-mediated decay (NMD) of mRNAs containing premature stop codons. Probable component of kinase complex containing smg-1 and recruited to stalled ribosomes. The polypeptide is Nonsense-mediated mRNA decay factor SMG9 (smg-9) (Caenorhabditis briggsae).